A 414-amino-acid polypeptide reads, in one-letter code: HERV-H LTR-associating protein 2 (414 aa).

A signal peptide spans 1 to 22; the sequence is MKAQTALSFFLILITSLSGSQG. Residues 61–131 form the Ig-like V-type 1 domain; sequence IHWKYQDSYK…YVGTAIQVIT (71 aa). N90 and N103 each carry an N-linked (GlcNAc...) asparagine glycan. Positions 138-222 constitute an Ig-like C1-type domain; that stretch reads VGVFLTPVMK…ENSLLKQTWT (85 aa). 2 disulfide bridges follow: C159–C210 and C243–C317. One can recognise an Ig-like V-type 2 domain in the interval 235–328; that stretch reads QSEHVSLSCQ…ISSDEYTLLT (94 aa). The N-linked (GlcNAc...) asparagine glycan is linked to N318. The helical transmembrane segment at 345–365 threads the bilayer; the sequence is KGLWILVPSAILAAFLLIWSV. The disordered stretch occupies residues 383–414; the sequence is GAQQERCCVPPGERCPSAPDNGEENVPLSGKV.

In terms of assembly, interacts with TMIGD2. As to expression, expressed at high levels in colon, kidney, testis, lung and pancreas, and at lower levels in small intestine, liver and skeletal muscle. In immune cells, highly expressed in B-cells, dendritic cells and macrophages. Not detected in T-cells.

The protein resides in the membrane. Through interaction with TMIGD2, costimulates T-cells in the context of TCR-mediated activation. Enhances T-cell proliferation and cytokine production via an AKT-dependent signaling cascade. The sequence is that of HERV-H LTR-associating protein 2 (HHLA2) from Homo sapiens (Human).